The following is a 783-amino-acid chain: Cilia- and flagella-associated protein 91 (783 aa).

The span at 748-760 (EDFELEEEAESLD) shows a compositional bias: acidic residues. The interval 748–783 (EDFELEEEAESLDSEVPTVSVSKTSTIKPTQDEGEG) is disordered. Polar residues predominate over residues 764-776 (PTVSVSKTSTIKP).

This sequence belongs to the CFAP91 family. In terms of assembly, part of a complex containing MYCBP, AKAP1 and PRKAR2B. Interacts with MYCBP and AKAP1. Interacts with CFAP61. Phosphorylated by PKA. In terms of tissue distribution, expressed in the testis, in cells involved in spermatogenesis.

The protein resides in the cytoplasm. It is found in the mitochondrion. Its subcellular location is the cytoskeleton. It localises to the cilium axoneme. Involved in sperm flagellum axonemal organization and function. May regulate cilium motility through its role in the assembly of the axonemal radial spokes. This is Cilia- and flagella-associated protein 91 from Mus musculus (Mouse).